Here is a 508-residue protein sequence, read N- to C-terminus: Probable G-protein coupled receptor 101 (508 aa).

The Extracellular segment spans residues 1–35 (MTSTCTNSTRESNSSHTCMPLSKMPISLAHGIIRS). N-linked (GlcNAc...) asparagine glycosylation is found at Asn7 and Asn13. Residues 36 to 56 (TVLVIFLAASFVGNIVLALVL) form a helical membrane-spanning segment. Residues 57–68 (QRKPQLLQVTNR) lie on the Cytoplasmic side of the membrane. A helical membrane pass occupies residues 69 to 89 (FIFNLLVTDLLQISLVAPWVV). The Extracellular portion of the chain corresponds to 90 to 106 (ATSVPLFWPLNSHFCTA). The cysteines at positions 104 and 182 are disulfide-linked. Residues 107-127 (LVSLTHLFAFASVNTIVVVSV) form a helical membrane-spanning segment. At 128 to 149 (DRYLSIIHPLSYPSKMTQRRGY) the chain is on the cytoplasmic side. The chain crosses the membrane as a helical span at residues 150–170 (LLLYGTWIVAILQSTPPLYGW). The Extracellular portion of the chain corresponds to 171 to 196 (GQAAFDERNALCSMIWGASPSYTILS). Residues 197 to 217 (VVSFIVIPLIVMIACYSVVFC) traverse the membrane as a helical segment. Over 218-399 (AARRQHALLY…PRCYQCKAAK (182 aa)) the chain is Cytoplasmic. The tract at residues 244-338 (NEDEEGAEKK…ENSMKADKGR (95 aa)) is disordered. 2 stretches are compositionally biased toward basic and acidic residues: residues 250–288 (AEKK…KAKE) and 318–338 (MEGK…DKGR). Residues 400–420 (VIFIIIFSYVLSLGPYCFLAV) traverse the membrane as a helical segment. Over 421–433 (LAVWVDVETQVPQ) the chain is Extracellular. A helical transmembrane segment spans residues 434 to 454 (WVITIIIWLFFLQCCIHPYVY). Residues 455–508 (GYMHKTIKKEIQDMLKKFFCKEKPPKEDSHPDLPGTEGGTEGKIVPSYDSATFP) lie on the Cytoplasmic side of the membrane. The span at 476 to 485 (EKPPKEDSHP) shows a compositional bias: basic and acidic residues. The segment at 476-508 (EKPPKEDSHPDLPGTEGGTEGKIVPSYDSATFP) is disordered.

It belongs to the G-protein coupled receptor 1 family.

The protein resides in the cell membrane. Functionally, orphan receptor. This chain is Probable G-protein coupled receptor 101 (GPR101), found in Homo sapiens (Human).